Reading from the N-terminus, the 182-residue chain is Adenylate kinase (182 aa).

Residue 12 to 17 (GAGKGT) participates in ATP binding. Residues 32–61 (STGDLLRDEVSSGSVLGIKAAEIMNKGELV) are NMP. AMP-binding positions include threonine 33, arginine 38, 59–61 (ELV), 85–88 (GFPR), and glutamine 92. An LID region spans residues 126–132 (ERGRQDD). Arginine 127 provides a ligand contact to ATP. Residues arginine 129 and arginine 140 each coordinate AMP. Alanine 168 is an ATP binding site.

Belongs to the adenylate kinase family. As to quaternary structure, monomer.

Its subcellular location is the cytoplasm. It carries out the reaction AMP + ATP = 2 ADP. It participates in purine metabolism; AMP biosynthesis via salvage pathway; AMP from ADP: step 1/1. Its function is as follows. Catalyzes the reversible transfer of the terminal phosphate group between ATP and AMP. Plays an important role in cellular energy homeostasis and in adenine nucleotide metabolism. The polypeptide is Adenylate kinase (Prochlorococcus marinus (strain NATL2A)).